The following is a 261-amino-acid chain: Cytochrome c oxidase subunit 3 (261 aa).

The Mitochondrial matrix portion of the chain corresponds to 1–15; it reads MTHQTHSYHMVNPSP. The helical transmembrane segment at 16–34 threads the bilayer; sequence WPLTGALSALLMTSGLIMW. Over 35 to 40 the chain is Mitochondrial intermembrane; it reads FHFNSM. The helical transmembrane segment at 41–66 threads the bilayer; sequence ILLTLGLSTNILTMYQWWRDIIREST. Topologically, residues 67–72 are mitochondrial matrix; it reads FQGHHT. A helical transmembrane segment spans residues 73–105; the sequence is PTVQKGLRYGMILFIVSEVLFFTGFFWAFYHSS. Residues 106-128 are Mitochondrial intermembrane-facing; it reads LAPTPELGGCWPPTGIHPLNPLE. The helical transmembrane segment at 129–152 threads the bilayer; the sequence is VPLLNTSVLLASGVSITWAHHSLM. Over 153 to 155 the chain is Mitochondrial matrix; the sequence is EGN. The helical transmembrane segment at 156–183 threads the bilayer; sequence RKHMLQALFITIALGLYFTLLQASEYYE. At 184-190 the chain is on the mitochondrial intermembrane side; sequence APFTISD. A helical membrane pass occupies residues 191-223; sequence GIYGSTFFVATGFHGLHVIIGSTFLIVCFLRQV. Residues 224–232 are Mitochondrial matrix-facing; sequence KFHFTSNHH. The helical transmembrane segment at 233–256 threads the bilayer; it reads FGFERAAWYWHFVDVVWLFLYVSI. The Mitochondrial intermembrane segment spans residues 257–261; it reads YWWGS.

The protein belongs to the cytochrome c oxidase subunit 3 family. In terms of assembly, component of the cytochrome c oxidase (complex IV, CIV), a multisubunit enzyme composed of 14 subunits. The complex is composed of a catalytic core of 3 subunits MT-CO1, MT-CO2 and MT-CO3, encoded in the mitochondrial DNA, and 11 supernumerary subunits COX4I, COX5A, COX5B, COX6A, COX6B, COX6C, COX7A, COX7B, COX7C, COX8 and NDUFA4, which are encoded in the nuclear genome. The complex exists as a monomer or a dimer and forms supercomplexes (SCs) in the inner mitochondrial membrane with NADH-ubiquinone oxidoreductase (complex I, CI) and ubiquinol-cytochrome c oxidoreductase (cytochrome b-c1 complex, complex III, CIII), resulting in different assemblies (supercomplex SCI(1)III(2)IV(1) and megacomplex MCI(2)III(2)IV(2)).

Its subcellular location is the mitochondrion inner membrane. The catalysed reaction is 4 Fe(II)-[cytochrome c] + O2 + 8 H(+)(in) = 4 Fe(III)-[cytochrome c] + 2 H2O + 4 H(+)(out). Component of the cytochrome c oxidase, the last enzyme in the mitochondrial electron transport chain which drives oxidative phosphorylation. The respiratory chain contains 3 multisubunit complexes succinate dehydrogenase (complex II, CII), ubiquinol-cytochrome c oxidoreductase (cytochrome b-c1 complex, complex III, CIII) and cytochrome c oxidase (complex IV, CIV), that cooperate to transfer electrons derived from NADH and succinate to molecular oxygen, creating an electrochemical gradient over the inner membrane that drives transmembrane transport and the ATP synthase. Cytochrome c oxidase is the component of the respiratory chain that catalyzes the reduction of oxygen to water. Electrons originating from reduced cytochrome c in the intermembrane space (IMS) are transferred via the dinuclear copper A center (CU(A)) of subunit 2 and heme A of subunit 1 to the active site in subunit 1, a binuclear center (BNC) formed by heme A3 and copper B (CU(B)). The BNC reduces molecular oxygen to 2 water molecules using 4 electrons from cytochrome c in the IMS and 4 protons from the mitochondrial matrix. This Balaenoptera musculus (Blue whale) protein is Cytochrome c oxidase subunit 3 (MT-CO3).